A 1102-amino-acid polypeptide reads, in one-letter code: Carbamoyl phosphate synthase large chain (1102 aa).

Positions 1-408 (MPKRTDIQSV…AFQKALRSLE (408 aa)) are carboxyphosphate synthetic domain. 12 residues coordinate ATP: Arg-129, Arg-175, Gly-181, Gly-182, Glu-214, Ile-216, Glu-221, Gly-247, Val-248, His-249, Gln-291, and Glu-305. The ATP-grasp 1 domain maps to 137 to 334 (EEVRKKIGHG…IAKIAAKLAV (198 aa)). Gln-291, Glu-305, and Asn-307 together coordinate Mg(2+). Residues Gln-291, Glu-305, and Asn-307 each coordinate Mn(2+). The tract at residues 409–551 (KKGSQFTFVG…YFYSSYDEES (143 aa)) is oligomerization domain. Residues 552–954 (EVAPREKPAV…AYAKSQAGAY (403 aa)) are carbamoyl phosphate synthetic domain. In terms of domain architecture, ATP-grasp 2 spans 682-873 (GRVLAEAGLP…LAKAAARISL (192 aa)). ATP is bound by residues Arg-718, Arg-757, Leu-759, Glu-764, Gly-789, Ile-790, His-791, Ser-792, Gln-832, and Glu-844. Gln-832, Glu-844, and Asn-846 together coordinate Mg(2+). Residues Gln-832, Glu-844, and Asn-846 each coordinate Mn(2+). Residues 955–1100 (GPLPTKGRAF…QEHAAFLIAA (146 aa)) enclose the MGS-like domain. Residues 955-1102 (GPLPTKGRAF…HAAFLIAARD (148 aa)) form an allosteric domain region.

This sequence belongs to the CarB family. Composed of two chains; the small (or glutamine) chain promotes the hydrolysis of glutamine to ammonia, which is used by the large (or ammonia) chain to synthesize carbamoyl phosphate. Tetramer of heterodimers (alpha,beta)4. Requires Mg(2+) as cofactor. It depends on Mn(2+) as a cofactor.

The catalysed reaction is hydrogencarbonate + L-glutamine + 2 ATP + H2O = carbamoyl phosphate + L-glutamate + 2 ADP + phosphate + 2 H(+). It carries out the reaction hydrogencarbonate + NH4(+) + 2 ATP = carbamoyl phosphate + 2 ADP + phosphate + 2 H(+). It participates in amino-acid biosynthesis; L-arginine biosynthesis; carbamoyl phosphate from bicarbonate: step 1/1. It functions in the pathway pyrimidine metabolism; UMP biosynthesis via de novo pathway; (S)-dihydroorotate from bicarbonate: step 1/3. Functionally, large subunit of the glutamine-dependent carbamoyl phosphate synthetase (CPSase). CPSase catalyzes the formation of carbamoyl phosphate from the ammonia moiety of glutamine, carbonate, and phosphate donated by ATP, constituting the first step of 2 biosynthetic pathways, one leading to arginine and/or urea and the other to pyrimidine nucleotides. The large subunit (synthetase) binds the substrates ammonia (free or transferred from glutamine from the small subunit), hydrogencarbonate and ATP and carries out an ATP-coupled ligase reaction, activating hydrogencarbonate by forming carboxy phosphate which reacts with ammonia to form carbamoyl phosphate. The protein is Carbamoyl phosphate synthase large chain of Streptomyces coelicolor (strain ATCC BAA-471 / A3(2) / M145).